Consider the following 509-residue polypeptide: Glutamate--tRNA ligase (509 aa).

The short motif at 20–30 (PSPTGFPHVGT) is the 'HIGH' region element. Zn(2+) is bound by residues Cys-117, Cys-119, Cys-144, and His-146. Positions 261-265 (KLSKR) match the 'KMSKS' region motif. ATP is bound at residue Lys-264.

Belongs to the class-I aminoacyl-tRNA synthetase family. Glutamate--tRNA ligase type 1 subfamily. As to quaternary structure, monomer. Requires Zn(2+) as cofactor.

It is found in the cytoplasm. It carries out the reaction tRNA(Glu) + L-glutamate + ATP = L-glutamyl-tRNA(Glu) + AMP + diphosphate. Its function is as follows. Catalyzes the attachment of glutamate to tRNA(Glu) in a two-step reaction: glutamate is first activated by ATP to form Glu-AMP and then transferred to the acceptor end of tRNA(Glu). The protein is Glutamate--tRNA ligase of Psychrobacter cryohalolentis (strain ATCC BAA-1226 / DSM 17306 / VKM B-2378 / K5).